Here is an 83-residue protein sequence, read N- to C-terminus: Small ribosomal subunit protein eS21 (83 aa).

Methionine 1 carries the post-translational modification N-acetylmethionine. Residue lysine 41 forms a Glycyl lysine isopeptide (Lys-Gly) (interchain with G-Cter in SUMO2) linkage.

It belongs to the eukaryotic ribosomal protein eS21 family. Component of the 40S small ribosomal subunit.

It localises to the cytoplasm. Its subcellular location is the cytosol. The protein resides in the rough endoplasmic reticulum. Component of the small ribosomal subunit. The ribosome is a large ribonucleoprotein complex responsible for the synthesis of proteins in the cell. This chain is Small ribosomal subunit protein eS21 (RPS21), found in Oryctolagus cuniculus (Rabbit).